We begin with the raw amino-acid sequence, 315 residues long: Cobalamin biosynthesis protein CobD (315 aa).

5 consecutive transmembrane segments (helical) span residues 54-74 (GLLF…ILFL), 78-98 (IAYW…LAMT), 152-172 (ADGV…LALM), 203-223 (IANF…SFIL), and 295-315 (LLYM…LLLF).

It belongs to the CobD/CbiB family.

The protein localises to the cell membrane. It functions in the pathway cofactor biosynthesis; adenosylcobalamin biosynthesis. Converts cobyric acid to cobinamide by the addition of aminopropanol on the F carboxylic group. The sequence is that of Cobalamin biosynthesis protein CobD from Listeria monocytogenes serovar 1/2a (strain ATCC BAA-679 / EGD-e).